A 357-amino-acid polypeptide reads, in one-letter code: Peptide chain release factor 1 (357 aa).

Residue Gln-234 is modified to N5-methylglutamine.

This sequence belongs to the prokaryotic/mitochondrial release factor family. Methylated by PrmC. Methylation increases the termination efficiency of RF1.

The protein localises to the cytoplasm. Functionally, peptide chain release factor 1 directs the termination of translation in response to the peptide chain termination codons UAG and UAA. In Frankia casuarinae (strain DSM 45818 / CECT 9043 / HFP020203 / CcI3), this protein is Peptide chain release factor 1.